Consider the following 104-residue polypeptide: DNA-directed RNA polymerase subunit omega (104 aa).

This sequence belongs to the RNA polymerase subunit omega family. As to quaternary structure, the RNAP catalytic core consists of 2 alpha, 1 beta, 1 beta' and 1 omega subunit. When a sigma factor is associated with the core the holoenzyme is formed, which can initiate transcription.

The catalysed reaction is RNA(n) + a ribonucleoside 5'-triphosphate = RNA(n+1) + diphosphate. Its function is as follows. Promotes RNA polymerase assembly. Latches the N- and C-terminal regions of the beta' subunit thereby facilitating its interaction with the beta and alpha subunits. This chain is DNA-directed RNA polymerase subunit omega (rpoZ), found in Streptococcus pyogenes serotype M1.